Consider the following 165-residue polypeptide: Nucleotide-binding protein NATL1_05371 (165 aa).

It belongs to the YajQ family.

Nucleotide-binding protein. The polypeptide is Nucleotide-binding protein NATL1_05371 (Prochlorococcus marinus (strain NATL1A)).